A 706-amino-acid polypeptide reads, in one-letter code: MTEIPSFQPPINATEVEEENAVFPTALTEWFSEVGNQVGEVALKLLSGEGDGMEVTPTPGCTGNGSVCNGTDSGGVVWDIPPLAHYIVGTAVFCIGCCGMFGNAVVVYSFIKSKGLRTPANFFIINLALSDFLMNLTNMPIFAVNSAFQRWLLSDFACELYGFAGGLFGCLSINTLMAISMDRYLVITKPFLVMRIVTKQRVMFAILLLWIWSLVWALPPLFGWSAYVSEGFGTSCTFDYMTPKLSYHIFTYIIFFTMYFIPGGVMIYCYYNIFATVKSGDKQFGKAVKEMAHEDVKNKAQQERQRKNEIKTAKIAFIVISLFMSAWTPYAVVSALGTLGYQDLVTPYLQSIPAMFAKSSAVYSPIVYAITYPKFREAVKKHIPCLSGCLPASEEETKTKTRGQSSASASMSMTQTTAPVHDPQASVDSGSSVSVDDSSGVSRQDTMMVKVEVDKRMEKAGGGAADAAPQEGASVSTVSAQIEVRPSGKVTTKADVISTPQTAHGLSASPVPKVAELGSSATLESAAIPGKIPTPLPSQPIAAPIERHMAAMADEPPPKPRGVATTVNVRRTESGYDRSQDSQRKKVVGDTHRSRSFNTTKDHFASEQPAALIQPKELYSDDTTKKMARQSSEKHEYDNPAFDEGITEVDTDSENETEGSYDMLSVRFQAMAEEPPVETYRKASDLAINLGKASLMLSEAHDETVL.

Topologically, residues 1–86 (MTEIPSFQPP…VWDIPPLAHY (86 aa)) are extracellular. Residues Asn12, Asn64, and Asn69 are each glycosylated (N-linked (GlcNAc...) asparagine). Residues 87–107 (IVGTAVFCIGCCGMFGNAVVV) traverse the membrane as a helical segment. Topologically, residues 108-121 (YSFIKSKGLRTPAN) are cytoplasmic. A helical membrane pass occupies residues 122–142 (FFIINLALSDFLMNLTNMPIF). Over 143–159 (AVNSAFQRWLLSDFACE) the chain is Extracellular. A disulfide bond links Cys158 and Cys236. The helical transmembrane segment at 160–180 (LYGFAGGLFGCLSINTLMAIS) threads the bilayer. Residues 181–201 (MDRYLVITKPFLVMRIVTKQR) lie on the Cytoplasmic side of the membrane. Residues 202–222 (VMFAILLLWIWSLVWALPPLF) traverse the membrane as a helical segment. Topologically, residues 223–248 (GWSAYVSEGFGTSCTFDYMTPKLSYH) are extracellular. Residues 249-269 (IFTYIIFFTMYFIPGGVMIYC) traverse the membrane as a helical segment. Topologically, residues 270–314 (YYNIFATVKSGDKQFGKAVKEMAHEDVKNKAQQERQRKNEIKTAK) are cytoplasmic. Residues 315–335 (IAFIVISLFMSAWTPYAVVSA) form a helical membrane-spanning segment. The Extracellular portion of the chain corresponds to 336–351 (LGTLGYQDLVTPYLQS). A helical transmembrane segment spans residues 352–372 (IPAMFAKSSAVYSPIVYAITY). Lys358 bears the N6-(retinylidene)lysine mark. The Cytoplasmic portion of the chain corresponds to 373 to 706 (PKFREAVKKH…LSEAHDETVL (334 aa)). Disordered stretches follow at residues 393-446 (SEEE…RQDT), 571-599 (RTES…SFNT), and 630-658 (QSSE…NETE). Composition is skewed to low complexity over residues 404–418 (QSSA…QTTA) and 426–442 (SVDS…SGVS). Positions 571–593 (RTESGYDRSQDSQRKKVVGDTHR) are enriched in basic and acidic residues. Over residues 645–658 (GITEVDTDSENETE) the composition is skewed to acidic residues.

It belongs to the G-protein coupled receptor 1 family. Opsin subfamily. Expressed in Joseph cells and photoreceptor cells of the dorsal ocelli.

It localises to the cell membrane. In terms of biological role, photoreceptor implicated in non-image-forming responses to light. Photoisomerizes covalently bound all-trans retinal back to 11-cis retinal. Most likely coupled to the G(q) signaling cascade. The chain is Melanopsin from Branchiostoma belcheri (Amphioxus).